Reading from the N-terminus, the 79-residue chain is Small ribosomal subunit protein bS18 (79 aa).

It belongs to the bacterial ribosomal protein bS18 family. Part of the 30S ribosomal subunit. Forms a tight heterodimer with protein bS6.

Binds as a heterodimer with protein bS6 to the central domain of the 16S rRNA, where it helps stabilize the platform of the 30S subunit. The sequence is that of Small ribosomal subunit protein bS18 from Streptococcus suis (strain 98HAH33).